The primary structure comprises 1003 residues: Translation initiation factor IF-2 (1003 aa).

Residues 36 to 392 form a disordered region; the sequence is SSTIEPPVVK…RQKRNEYESM (357 aa). Positions 62-151 are enriched in low complexity; that stretch reads AAKPAAAKPA…PKPAAAAKPA (90 aa). Pro residues-rich tracts occupy residues 178 to 190 and 213 to 230; these read DGMPRPMGKPAPK and PRPGGGPRPGGGPRPGGG. Gly residues-rich tracts occupy residues 231–243 and 255–271; these read PRPQGQGRPGGQR and GNRGGQRQGAGAGGPRP. The span at 273–286 shows a compositional bias: low complexity; the sequence is GGPRPQGGSRPQGG. The segment covering 329 to 372 has biased composition (gly residues); the sequence is GKGGRGGQAGGGAGGGFNRGGGTGGGAGRGGRRGGTAGAFGRPG. Basic residues predominate over residues 376-385; sequence RRGRKSKRQK. A tr-type G domain is found at 498-670; the sequence is KRPPVVTVMG…VCLTADAELD (173 aa). The tract at residues 507–514 is G1; that stretch reads GHVDHGKT. Residue 507 to 514 coordinates GTP; that stretch reads GHVDHGKT. A G2 region spans residues 532–536; it reads GITQG. Positions 557 to 560 are G3; it reads DTPG. Residues 557–561 and 611–614 contribute to the GTP site; these read DTPGH and NKID. Residues 611 to 614 are G4; it reads NKID. The segment at 647–649 is G5; the sequence is SAK.

It belongs to the TRAFAC class translation factor GTPase superfamily. Classic translation factor GTPase family. IF-2 subfamily.

It localises to the cytoplasm. Functionally, one of the essential components for the initiation of protein synthesis. Protects formylmethionyl-tRNA from spontaneous hydrolysis and promotes its binding to the 30S ribosomal subunits. Also involved in the hydrolysis of GTP during the formation of the 70S ribosomal complex. The chain is Translation initiation factor IF-2 from Corynebacterium glutamicum (strain R).